A 118-amino-acid chain; its full sequence is Ribonuclease P protein component (118 aa).

This sequence belongs to the RnpA family. Consists of a catalytic RNA component (M1 or rnpB) and a protein subunit.

The enzyme catalyses Endonucleolytic cleavage of RNA, removing 5'-extranucleotides from tRNA precursor.. RNaseP catalyzes the removal of the 5'-leader sequence from pre-tRNA to produce the mature 5'-terminus. It can also cleave other RNA substrates such as 4.5S RNA. The protein component plays an auxiliary but essential role in vivo by binding to the 5'-leader sequence and broadening the substrate specificity of the ribozyme. The sequence is that of Ribonuclease P protein component from Vibrio campbellii (strain ATCC BAA-1116).